A 233-amino-acid chain; its full sequence is Large ribosomal subunit protein uL1 (233 aa).

The protein belongs to the universal ribosomal protein uL1 family. As to quaternary structure, part of the 50S ribosomal subunit.

Its function is as follows. Binds directly to 23S rRNA. The L1 stalk is quite mobile in the ribosome, and is involved in E site tRNA release. In terms of biological role, protein L1 is also a translational repressor protein, it controls the translation of the L11 operon by binding to its mRNA. The chain is Large ribosomal subunit protein uL1 from Pelobacter propionicus (strain DSM 2379 / NBRC 103807 / OttBd1).